Here is a 465-residue protein sequence, read N- to C-terminus: Ribulose bisphosphate carboxylase large chain (465 aa).

Lys4 bears the N6,N6,N6-trimethyllysine mark. Residues Asn113 and Thr163 each coordinate substrate. Lys165 serves as the catalytic Proton acceptor. Lys167 lines the substrate pocket. Residues Lys191, Asp193, and Glu194 each coordinate Mg(2+). Lys191 carries the post-translational modification N6-carboxylysine. The active-site Proton acceptor is the His284. The substrate site is built by Arg285, His317, and Ser369.

The protein belongs to the RuBisCO large chain family. Type I subfamily. In terms of assembly, heterohexadecamer of 8 large chains and 8 small chains; disulfide-linked. The disulfide link is formed within the large subunit homodimers. Requires Mg(2+) as cofactor. The disulfide bond which can form in the large chain dimeric partners within the hexadecamer appears to be associated with oxidative stress and protein turnover.

It localises to the plastid. The protein resides in the chloroplast. The catalysed reaction is 2 (2R)-3-phosphoglycerate + 2 H(+) = D-ribulose 1,5-bisphosphate + CO2 + H2O. It catalyses the reaction D-ribulose 1,5-bisphosphate + O2 = 2-phosphoglycolate + (2R)-3-phosphoglycerate + 2 H(+). In terms of biological role, ruBisCO catalyzes two reactions: the carboxylation of D-ribulose 1,5-bisphosphate, the primary event in carbon dioxide fixation, as well as the oxidative fragmentation of the pentose substrate in the photorespiration process. Both reactions occur simultaneously and in competition at the same active site. The protein is Ribulose bisphosphate carboxylase large chain of Acer saccharum (Sugar maple).